Reading from the N-terminus, the 221-residue chain is Vesicle-associated membrane protein 713 (221 aa).

Residue alanine 2 is modified to N-acetylalanine. Residues 2–190 (AIIFALVARG…RTIMWWRNVK (189 aa)) are Cytoplasmic-facing. The Longin domain occupies 7–112 (LVARGTVVLS…SMNDEFSRVL (106 aa)). In terms of domain architecture, v-SNARE coiled-coil homology spans 127–187 (RMSRIKGEMS…RRYRTIMWWR (61 aa)). The helical; Anchor for type IV membrane protein transmembrane segment at 191 to 211 (LTIALILVLALVVYIAMAFVC) threads the bilayer. Over 212–221 (HGPSLPSCFK) the chain is Vesicular.

The protein belongs to the synaptobrevin family. In terms of assembly, interacts with subunits of the vacuole protein sorting (HOPS) complex including VPS11, VCL1, VPS18, VPS33, VPS39 and VPS41. In terms of tissue distribution, highly expressed in stems and roots. Detected in flowers and leaves.

It is found in the vacuole membrane. Its subcellular location is the prevacuolar compartment membrane. Its function is as follows. Involved in the targeting and/or fusion of transport vesicles to their target membrane. This is Vesicle-associated membrane protein 713 from Arabidopsis thaliana (Mouse-ear cress).